We begin with the raw amino-acid sequence, 299 residues long: Fluorinase (299 aa).

Residues Asp15, 20 to 22 (DDS), Tyr76, Ser157, Asp210, Asn215, 269 to 270 (SR), and 277 to 279 (RNA) contribute to the S-adenosyl-L-methionine site.

Belongs to the SAM hydrolase / SAM-dependent halogenase family.

It catalyses the reaction fluoride + S-adenosyl-L-methionine = 5'-deoxy-5'-fluoroadenosine + L-methionine. Activity is not severely affected by most metal ions (Mg(2+), Mn(2+), Co(2+) and Fe(2+)), but both Cu(2+) and Zn(2+) are strong inhibitors. Its function is as follows. Catalyzes the formation of a C-F bond by combining S-adenosyl-L-methionine (SAM) and fluoride to generate 5'-fluoro-5'-deoxyadenosine (5'-FDA) and L-methionine. This chain is Fluorinase, found in Actinopolyspora mzabensis.